A 421-amino-acid polypeptide reads, in one-letter code: Probable indole-3-pyruvate monooxygenase YUCCA9 (421 aa).

Residue 29 to 34 participates in FAD binding; the sequence is GAGPSG. 196–201 provides a ligand contact to NADP(+); sequence GCGNSG.

Belongs to the FMO family. Requires FAD as cofactor.

It catalyses the reaction indole-3-pyruvate + NADPH + O2 + H(+) = (indol-3-yl)acetate + CO2 + NADP(+) + H2O. It participates in plant hormone metabolism; auxin biosynthesis. In terms of biological role, involved in auxin biosynthesis. Belongs to the set of redundant YUCCA genes probably responsible for auxin biosynthesis in roots. The polypeptide is Probable indole-3-pyruvate monooxygenase YUCCA9 (YUC9) (Arabidopsis thaliana (Mouse-ear cress)).